The following is a 452-amino-acid chain: Exodeoxyribonuclease 7 large subunit (452 aa).

This sequence belongs to the XseA family. In terms of assembly, heterooligomer composed of large and small subunits.

Its subcellular location is the cytoplasm. It carries out the reaction Exonucleolytic cleavage in either 5'- to 3'- or 3'- to 5'-direction to yield nucleoside 5'-phosphates.. Its function is as follows. Bidirectionally degrades single-stranded DNA into large acid-insoluble oligonucleotides, which are then degraded further into small acid-soluble oligonucleotides. The chain is Exodeoxyribonuclease 7 large subunit from Bacillus anthracis (strain A0248).